A 294-amino-acid polypeptide reads, in one-letter code: MHNIFKGLITALITPFKDNKLDLYALERIVKHQIKHEVDAVLIAGSTGESSSLSFEEYKLLLQTSVEIVNKCIPIISGCSSNNTTYARALAAESTKIGVDGFMASPPSYVKPTQHGIYKHFEALHEACNLPIMLYSAPTRSGVDFSDETILRLSKLPRIVALKDCGVDLERPLRIRATVKKDFNILTGNDEVVLAFNAQGGVGWTSVASNIVPNICKELLEKWNKNDTKGALEIHQKLLPLYTALFVESNPIPIKYAAYYLGLCENEIRPPLTEARDSAKKQIENIITSLSIKI.

Pyruvate is bound at residue T47. The active-site Proton donor/acceptor is the Y135. Catalysis depends on K163, which acts as the Schiff-base intermediate with substrate. T205 contributes to the pyruvate binding site.

The protein belongs to the DapA family. Homotetramer; dimer of dimers.

Its subcellular location is the cytoplasm. It carries out the reaction L-aspartate 4-semialdehyde + pyruvate = (2S,4S)-4-hydroxy-2,3,4,5-tetrahydrodipicolinate + H2O + H(+). The protein operates within amino-acid biosynthesis; L-lysine biosynthesis via DAP pathway; (S)-tetrahydrodipicolinate from L-aspartate: step 3/4. Catalyzes the condensation of (S)-aspartate-beta-semialdehyde [(S)-ASA] and pyruvate to 4-hydroxy-tetrahydrodipicolinate (HTPA). This is 4-hydroxy-tetrahydrodipicolinate synthase from Rickettsia peacockii (strain Rustic).